Reading from the N-terminus, the 142-residue chain is Hemoglobin subunit alpha-A (142 aa).

Positions 2–142 (VLSAADKNNV…VGTVLTAKYR (141 aa)) constitute a Globin domain. Residue His59 coordinates O2. His88 is a heme b binding site.

It belongs to the globin family. As to quaternary structure, heterotetramer of two alpha chains and two beta chains. Red blood cells.

Functionally, involved in oxygen transport from the lung to the various peripheral tissues. In Meleagris gallopavo (Wild turkey), this protein is Hemoglobin subunit alpha-A (HBAA).